An 886-amino-acid chain; its full sequence is MEIKEEYSIELEKKVQEKWEDEKTFKFLDDEKRPPYIIDTPPPYPTGRMHLGHGLNWTYMDIIARFKRMNGYDVLFPQGWDCHGLPTEVKVEELNNITKSDIDRHEFRRLCVELTDENVEKMRGQVRSLGISIDWDREYITMNPDYVRKSQTAFLKMYEKGLIYRGKHPVNWCPRCETAIAFAEVEYQGRTSKLNYIKFPYAENSGKYLEIATSRPELMAACVGIVVHPEDERYSDVVGKTVKVPLFDQEVNVYPDSDVEKEFGTGVVMVCTFGDKTDVTWVNRHKLEVKKAINEKGQLTEICGKYAGKKSDDARKEIISDLISENYMIKQEPLEQNVGSCWRCKTPIEIIVGDQWFVNVTKLLTEVENAANEISWVPEHMKARLMKWIEDMGWDWCISRQRLFATPIPVWYCKDCGEIIVAKPEDLPIDPTKESPYTCKCGNSNLVAETDVLDTWMDSSITPLVIAGWLEDEEFFKKHYPVQLRPQGHDIIRTWAFYTMVRSLAITGEKPWDEIVINGMVFGEDGFKMSKSRGNVVEPGEITKTYGADALRLWASNSTIGKDVPFAWKEVEYGGRFLRKIWNACKFAKMNISDETISELKSLNSISIENPVDLWILSKLNNLISKVSDDLGNYKINTVVEIQKFLWHEFCDNYIEMVKHRLYNKEESESAQQEKLMAQYTLYKVITESVKLLTPFTPHFAEIVGEIYEIDDLHTSWPVSDERLISLENEFVGEVVKNTVASIRRYKSNKGMPLNAELNKVEMYVSDEKDFNAVSKASEDVKKSLKIKELEINLGKPSLEQKISEVTPNKSKIGPEFKKDAGKVMAFIKEADADTIEKMLSEGIETEFGILNKEHIKEVKRAIYNKGEIVETADIDSLIDTIAIIQ.

Positions 43–53 (PYPTGRMHLGH) match the 'HIGH' region motif. The short motif at 528 to 532 (KMSKS) is the 'KMSKS' region element. Lys-531 lines the ATP pocket.

The protein belongs to the class-I aminoacyl-tRNA synthetase family. ValS type 2 subfamily.

It is found in the cytoplasm. It catalyses the reaction tRNA(Val) + L-valine + ATP = L-valyl-tRNA(Val) + AMP + diphosphate. Functionally, catalyzes the attachment of valine to tRNA(Val). As ValRS can inadvertently accommodate and process structurally similar amino acids such as threonine, to avoid such errors, it has a 'posttransfer' editing activity that hydrolyzes mischarged Thr-tRNA(Val) in a tRNA-dependent manner. The protein is Valine--tRNA ligase of Methanococcus maripaludis (strain DSM 14266 / JCM 13030 / NBRC 101832 / S2 / LL).